Here is a 375-residue protein sequence, read N- to C-terminus: DNA replication and repair protein RecF (375 aa).

Residue 30 to 37 (GLNGQGKT) participates in ATP binding.

The protein belongs to the RecF family.

The protein localises to the cytoplasm. Functionally, the RecF protein is involved in DNA metabolism; it is required for DNA replication and normal SOS inducibility. RecF binds preferentially to single-stranded, linear DNA. It also seems to bind ATP. The protein is DNA replication and repair protein RecF of Halothermothrix orenii (strain H 168 / OCM 544 / DSM 9562).